A 396-amino-acid polypeptide reads, in one-letter code: Tryptophan synthase beta chain (396 aa).

At Lys-86 the chain carries N6-(pyridoxal phosphate)lysine.

The protein belongs to the TrpB family. As to quaternary structure, tetramer of two alpha and two beta chains. Pyridoxal 5'-phosphate serves as cofactor.

It catalyses the reaction (1S,2R)-1-C-(indol-3-yl)glycerol 3-phosphate + L-serine = D-glyceraldehyde 3-phosphate + L-tryptophan + H2O. It participates in amino-acid biosynthesis; L-tryptophan biosynthesis; L-tryptophan from chorismate: step 5/5. In terms of biological role, the beta subunit is responsible for the synthesis of L-tryptophan from indole and L-serine. This is Tryptophan synthase beta chain from Aliivibrio fischeri (strain ATCC 700601 / ES114) (Vibrio fischeri).